Reading from the N-terminus, the 346-residue chain is Putative agmatine deiminase (346 aa).

The active-site Amidino-cysteine intermediate is the Cys-338.

This sequence belongs to the agmatine deiminase family.

The enzyme catalyses agmatine + H2O = N-carbamoylputrescine + NH4(+). The sequence is that of Putative agmatine deiminase from Streptomyces avermitilis (strain ATCC 31267 / DSM 46492 / JCM 5070 / NBRC 14893 / NCIMB 12804 / NRRL 8165 / MA-4680).